A 663-amino-acid polypeptide reads, in one-letter code: Methionine--tRNA ligase (663 aa).

The 'HIGH' region motif lies at 10–20 (AYTNGPLHLGH). Residues cysteine 142, cysteine 145, cysteine 154, and cysteine 157 each coordinate Zn(2+). A 'KMSKS' region motif is present at residues 323-327 (KMSTS). Threonine 326 contacts ATP. The tRNA-binding domain occupies 563 to 663 (YFGNVDLRVG…RDLPVGSKIH (101 aa)).

This sequence belongs to the class-I aminoacyl-tRNA synthetase family. MetG type 1 subfamily. As to quaternary structure, homodimer. Requires Zn(2+) as cofactor.

It is found in the cytoplasm. The enzyme catalyses tRNA(Met) + L-methionine + ATP = L-methionyl-tRNA(Met) + AMP + diphosphate. In terms of biological role, is required not only for elongation of protein synthesis but also for the initiation of all mRNA translation through initiator tRNA(fMet) aminoacylation. In Methanococcus maripaludis (strain C7 / ATCC BAA-1331), this protein is Methionine--tRNA ligase.